The primary structure comprises 69 residues: Putative membrane protein insertion efficiency factor (69 aa).

The protein belongs to the UPF0161 family.

It localises to the cell membrane. Its function is as follows. Could be involved in insertion of integral membrane proteins into the membrane. The polypeptide is Putative membrane protein insertion efficiency factor (Alkaliphilus metalliredigens (strain QYMF)).